Reading from the N-terminus, the 218-residue chain is Cytochrome b6 (218 aa).

The chain crosses the membrane as a helical span at residues 35–55; that stretch reads IFYCLGGITLVCFLIQFATGF. Cysteine 38 lines the heme c pocket. Heme b contacts are provided by histidine 89 and histidine 103. 3 consecutive transmembrane segments (helical) span residues 93–113, 119–139, and 189–209; these read ASMM…TGGF, LTWV…VTGY, and LHTF…FLMI. Residues histidine 190 and histidine 205 each contribute to the heme b site.

This sequence belongs to the cytochrome b family. PetB subfamily. In terms of assembly, the 4 large subunits of the cytochrome b6-f complex are cytochrome b6, subunit IV (17 kDa polypeptide, PetD), cytochrome f and the Rieske protein, while the 4 small subunits are PetG, PetL, PetM and PetN. The complex functions as a dimer. The cofactor is heme b. Requires heme c as cofactor.

The protein resides in the cellular thylakoid membrane. In terms of biological role, component of the cytochrome b6-f complex, which mediates electron transfer between photosystem II (PSII) and photosystem I (PSI), cyclic electron flow around PSI, and state transitions. The protein is Cytochrome b6 of Synechococcus sp. (strain CC9902).